A 512-amino-acid chain; its full sequence is Choline-sulfatase (512 aa).

Ca(2+)-binding residues include Asp-14, Gln-15, and Cys-54. The active-site Nucleophile is the Cys-54. Cys-54 carries the 3-oxoalanine (Cys) modification. The active site involves His-104. Positions 296 and 297 each coordinate Ca(2+).

This sequence belongs to the sulfatase family. Ca(2+) is required as a cofactor. The conversion to 3-oxoalanine (also known as C-formylglycine, FGly), of a serine or cysteine residue in prokaryotes and of a cysteine residue in eukaryotes, is critical for catalytic activity.

The enzyme catalyses choline sulfate + H2O = choline + sulfate + H(+). Its pathway is amine and polyamine biosynthesis; choline biosynthesis; choline from choline sulfate: step 1/1. Functionally, converts choline-O-sulfate into choline. The sequence is that of Choline-sulfatase (betC) from Rhizobium meliloti (strain 1021) (Ensifer meliloti).